We begin with the raw amino-acid sequence, 487 residues long: Cytochrome P450 2C4 (487 aa).

C432 is a binding site for heme.

It belongs to the cytochrome P450 family. The cofactor is heme.

The protein localises to the endoplasmic reticulum membrane. It localises to the microsome membrane. It catalyses the reaction an organic molecule + reduced [NADPH--hemoprotein reductase] + O2 = an alcohol + oxidized [NADPH--hemoprotein reductase] + H2O + H(+). Its function is as follows. Cytochromes P450 are a group of heme-thiolate monooxygenases. In liver microsomes, this enzyme is involved in an NADPH-dependent electron transport pathway. It oxidizes a variety of structurally unrelated compounds, including steroids, fatty acids, and xenobiotics. This chain is Cytochrome P450 2C4 (CYP2C4), found in Oryctolagus cuniculus (Rabbit).